The primary structure comprises 196 residues: Imidazoleglycerol-phosphate dehydratase (196 aa).

It belongs to the imidazoleglycerol-phosphate dehydratase family.

The protein localises to the cytoplasm. The catalysed reaction is D-erythro-1-(imidazol-4-yl)glycerol 3-phosphate = 3-(imidazol-4-yl)-2-oxopropyl phosphate + H2O. The protein operates within amino-acid biosynthesis; L-histidine biosynthesis; L-histidine from 5-phospho-alpha-D-ribose 1-diphosphate: step 6/9. This Ralstonia pickettii (strain 12J) protein is Imidazoleglycerol-phosphate dehydratase.